Here is a 174-residue protein sequence, read N- to C-terminus: Cytochrome c-type biogenesis protein CcmE (174 aa).

Residues Met1–Arg7 lie on the Cytoplasmic side of the membrane. A helical; Signal-anchor for type II membrane protein membrane pass occupies residues Leu8–Ala28. Topologically, residues Leu29–Pro174 are periplasmic. Heme contacts are provided by His121 and Tyr125. Basic and acidic residues predominate over residues Val130 to Glu144. Residues Val130 to Pro174 form a disordered region. Over residues Pro156 to Pro174 the composition is skewed to low complexity.

It belongs to the CcmE/CycJ family.

It localises to the cell inner membrane. Functionally, heme chaperone required for the biogenesis of c-type cytochromes. Transiently binds heme delivered by CcmC and transfers the heme to apo-cytochromes in a process facilitated by CcmF and CcmH. The polypeptide is Cytochrome c-type biogenesis protein CcmE (Azorhizobium caulinodans (strain ATCC 43989 / DSM 5975 / JCM 20966 / LMG 6465 / NBRC 14845 / NCIMB 13405 / ORS 571)).